The primary structure comprises 428 residues: Tryptophan synthase beta chain (428 aa).

The residue at position 100 (Lys-100) is an N6-(pyridoxal phosphate)lysine.

Belongs to the TrpB family. Tetramer of two alpha and two beta chains. The cofactor is pyridoxal 5'-phosphate.

It carries out the reaction (1S,2R)-1-C-(indol-3-yl)glycerol 3-phosphate + L-serine = D-glyceraldehyde 3-phosphate + L-tryptophan + H2O. It functions in the pathway amino-acid biosynthesis; L-tryptophan biosynthesis; L-tryptophan from chorismate: step 5/5. In terms of biological role, the beta subunit is responsible for the synthesis of L-tryptophan from indole and L-serine. In Streptomyces avermitilis (strain ATCC 31267 / DSM 46492 / JCM 5070 / NBRC 14893 / NCIMB 12804 / NRRL 8165 / MA-4680), this protein is Tryptophan synthase beta chain.